The sequence spans 384 residues: Cell division protein FtsZ (384 aa).

GTP is bound by residues 20-24, 107-109, E138, R142, and N186; these read GGGGN and GTG.

This sequence belongs to the FtsZ family. Homodimer. Polymerizes to form a dynamic ring structure in a strictly GTP-dependent manner. Interacts directly with several other division proteins.

It is found in the cytoplasm. Its function is as follows. Essential cell division protein that forms a contractile ring structure (Z ring) at the future cell division site. The regulation of the ring assembly controls the timing and the location of cell division. One of the functions of the FtsZ ring is to recruit other cell division proteins to the septum to produce a new cell wall between the dividing cells. Binds GTP and shows GTPase activity. This Buchnera aphidicola subsp. Schizaphis graminum (strain Sg) protein is Cell division protein FtsZ.